The chain runs to 127 residues: Putative adhesin P1-like protein MPN_203 (127 aa).

Residues 70 to 90 form a disordered region; it reads TENFTQPQPQPQALKTTTPVF.

This sequence belongs to the adhesin P1 family.

The protein is Putative adhesin P1-like protein MPN_203 of Mycoplasma pneumoniae (strain ATCC 29342 / M129 / Subtype 1) (Mycoplasmoides pneumoniae).